The following is a 142-amino-acid chain: MFIGEYQHSLDSKNRMIVPVKLREDLGEKFVITKGLDGCIYAYTINEWGILENKLKTLPLTNRDARAFVRFFFSGACIVELDKQGRGLIPQNLKEYAGIEKDIVSIGVLSRVEIWSREKWSNYNESDIDYDLIAEKMNDLGI.

SpoVT-AbrB domains follow at residues 5 to 47 (EYQH…TINE) and 76 to 119 (ACIV…SREK).

It belongs to the MraZ family. Forms oligomers.

Its subcellular location is the cytoplasm. It localises to the nucleoid. The chain is Transcriptional regulator MraZ from Clostridium botulinum (strain Alaska E43 / Type E3).